Here is a 333-residue protein sequence, read N- to C-terminus: 4-hydroxy-3-methylbut-2-enyl diphosphate reductase (333 aa).

Cys-34 is a binding site for [4Fe-4S] cluster. (2E)-4-hydroxy-3-methylbut-2-enyl diphosphate is bound by residues His-63 and His-96. His-63 and His-96 together coordinate dimethylallyl diphosphate. Residues His-63 and His-96 each coordinate isopentenyl diphosphate. Cys-118 lines the [4Fe-4S] cluster pocket. (2E)-4-hydroxy-3-methylbut-2-enyl diphosphate is bound at residue His-146. His-146 provides a ligand contact to dimethylallyl diphosphate. Residue His-146 participates in isopentenyl diphosphate binding. Glu-148 functions as the Proton donor in the catalytic mechanism. Thr-186 lines the (2E)-4-hydroxy-3-methylbut-2-enyl diphosphate pocket. Cys-216 contributes to the [4Fe-4S] cluster binding site. 4 residues coordinate (2E)-4-hydroxy-3-methylbut-2-enyl diphosphate: Ser-244, Ser-245, Asn-246, and Ser-289. 4 residues coordinate dimethylallyl diphosphate: Ser-244, Ser-245, Asn-246, and Ser-289. 4 residues coordinate isopentenyl diphosphate: Ser-244, Ser-245, Asn-246, and Ser-289.

It belongs to the IspH family. The cofactor is [4Fe-4S] cluster.

The enzyme catalyses isopentenyl diphosphate + 2 oxidized [2Fe-2S]-[ferredoxin] + H2O = (2E)-4-hydroxy-3-methylbut-2-enyl diphosphate + 2 reduced [2Fe-2S]-[ferredoxin] + 2 H(+). It carries out the reaction dimethylallyl diphosphate + 2 oxidized [2Fe-2S]-[ferredoxin] + H2O = (2E)-4-hydroxy-3-methylbut-2-enyl diphosphate + 2 reduced [2Fe-2S]-[ferredoxin] + 2 H(+). It functions in the pathway isoprenoid biosynthesis; dimethylallyl diphosphate biosynthesis; dimethylallyl diphosphate from (2E)-4-hydroxy-3-methylbutenyl diphosphate: step 1/1. It participates in isoprenoid biosynthesis; isopentenyl diphosphate biosynthesis via DXP pathway; isopentenyl diphosphate from 1-deoxy-D-xylulose 5-phosphate: step 6/6. In terms of biological role, catalyzes the conversion of 1-hydroxy-2-methyl-2-(E)-butenyl 4-diphosphate (HMBPP) into a mixture of isopentenyl diphosphate (IPP) and dimethylallyl diphosphate (DMAPP). Acts in the terminal step of the DOXP/MEP pathway for isoprenoid precursor biosynthesis. The chain is 4-hydroxy-3-methylbut-2-enyl diphosphate reductase from Mycobacterium sp. (strain KMS).